The primary structure comprises 251 residues: Pyridoxine 5'-phosphate synthase (251 aa).

N7 is a 3-amino-2-oxopropyl phosphate binding site. D9–H10 is a 1-deoxy-D-xylulose 5-phosphate binding site. R18 contacts 3-amino-2-oxopropyl phosphate. H43 serves as the catalytic Proton acceptor. 1-deoxy-D-xylulose 5-phosphate contacts are provided by R45 and H50. The active-site Proton acceptor is E70. T100 serves as a coordination point for 1-deoxy-D-xylulose 5-phosphate. H198 acts as the Proton donor in catalysis. 3-amino-2-oxopropyl phosphate contacts are provided by residues A199 and G220–H221.

The protein belongs to the PNP synthase family. In terms of assembly, homooctamer; tetramer of dimers.

The protein localises to the cytoplasm. The enzyme catalyses 3-amino-2-oxopropyl phosphate + 1-deoxy-D-xylulose 5-phosphate = pyridoxine 5'-phosphate + phosphate + 2 H2O + H(+). Its pathway is cofactor biosynthesis; pyridoxine 5'-phosphate biosynthesis; pyridoxine 5'-phosphate from D-erythrose 4-phosphate: step 5/5. Functionally, catalyzes the complicated ring closure reaction between the two acyclic compounds 1-deoxy-D-xylulose-5-phosphate (DXP) and 3-amino-2-oxopropyl phosphate (1-amino-acetone-3-phosphate or AAP) to form pyridoxine 5'-phosphate (PNP) and inorganic phosphate. This Dechloromonas aromatica (strain RCB) protein is Pyridoxine 5'-phosphate synthase.